Here is a 431-residue protein sequence, read N- to C-terminus: Histidine--tRNA ligase (431 aa).

This sequence belongs to the class-II aminoacyl-tRNA synthetase family. Homodimer.

It is found in the cytoplasm. The catalysed reaction is tRNA(His) + L-histidine + ATP = L-histidyl-tRNA(His) + AMP + diphosphate + H(+). This chain is Histidine--tRNA ligase (hisS), found in Leifsonia xyli subsp. xyli (strain CTCB07).